A 541-amino-acid chain; its full sequence is Carboxypeptidase Y homolog A (541 aa).

Positions 1–17 are cleaved as a signal peptide; sequence MKTFTAALLVGTALAAV. The propeptide occupies 18–122; it reads PQQQPLQTQV…KLENYDLRVK (105 aa). Disulfide bonds link cysteine 177-cysteine 416, cysteine 311-cysteine 325, cysteine 335-cysteine 358, cysteine 342-cysteine 351, and cysteine 380-cysteine 386. An N-linked (GlcNAc...) asparagine glycan is attached at asparagine 208. Serine 264 is a catalytic residue. The active site involves aspartate 455. 3 N-linked (GlcNAc...) asparagine glycosylation sites follow: asparagine 485, asparagine 491, and asparagine 506. Residue histidine 517 is part of the active site.

It belongs to the peptidase S10 family.

It localises to the vacuole. It catalyses the reaction Release of a C-terminal amino acid with broad specificity.. Its function is as follows. Vacuolar carboxypeptidase involved in degradation of small peptides. Digests preferentially peptides containing an aliphatic or hydrophobic residue in P1' position, as well as methionine, leucine or phenylalanine in P1 position of ester substrate. This chain is Carboxypeptidase Y homolog A (cpyA), found in Uncinocarpus reesii (strain UAMH 1704).